Here is a 165-residue protein sequence, read N- to C-terminus: 2-C-methyl-D-erythritol 2,4-cyclodiphosphate synthase (165 aa).

Residues Asp-13 and His-15 each coordinate a divalent metal cation. 4-CDP-2-C-methyl-D-erythritol 2-phosphate is bound by residues 13–15 and 39–40; these read DRH and HS. An a divalent metal cation-binding site is contributed by His-47. 4-CDP-2-C-methyl-D-erythritol 2-phosphate-binding positions include 61–63 and Phe-141; that span reads DIG.

This sequence belongs to the IspF family. In terms of assembly, homotrimer. The cofactor is a divalent metal cation.

It carries out the reaction 4-CDP-2-C-methyl-D-erythritol 2-phosphate = 2-C-methyl-D-erythritol 2,4-cyclic diphosphate + CMP. Its pathway is isoprenoid biosynthesis; isopentenyl diphosphate biosynthesis via DXP pathway; isopentenyl diphosphate from 1-deoxy-D-xylulose 5-phosphate: step 4/6. Involved in the biosynthesis of isopentenyl diphosphate (IPP) and dimethylallyl diphosphate (DMAPP), two major building blocks of isoprenoid compounds. Catalyzes the conversion of 4-diphosphocytidyl-2-C-methyl-D-erythritol 2-phosphate (CDP-ME2P) to 2-C-methyl-D-erythritol 2,4-cyclodiphosphate (ME-CPP) with a corresponding release of cytidine 5-monophosphate (CMP). In Thermotoga maritima (strain ATCC 43589 / DSM 3109 / JCM 10099 / NBRC 100826 / MSB8), this protein is 2-C-methyl-D-erythritol 2,4-cyclodiphosphate synthase.